We begin with the raw amino-acid sequence, 86 residues long: YcgL domain-containing protein IL1825 (86 aa).

The YcgL domain maps to 1 to 85 (MLCDVYRSSK…KREELQVNVN (85 aa)).

The sequence is that of YcgL domain-containing protein IL1825 from Idiomarina loihiensis (strain ATCC BAA-735 / DSM 15497 / L2-TR).